A 612-amino-acid polypeptide reads, in one-letter code: C4-dicarboxylate transport sensor protein DctB (612 aa).

The next 2 helical transmembrane spans lie at 23–43 and 292–312; these read SLVILALLLAPLLWPLQYFAE and VLLIGGATLLALLLLLTLLTL. A coiled-coil region spans residues 328–376; the sequence is KRQLEERVLERTRELENANAQLQQEVHEREQAQRELMRAQDEVVQAGKL. The region spanning 385–599 is the Histidine kinase domain; it reads SISHELNQPL…VVRLHLLPGV (215 aa). The residue at position 388 (His-388) is a Phosphohistidine; by autocatalysis.

In terms of processing, autophosphorylated.

It is found in the cell inner membrane. It catalyses the reaction ATP + protein L-histidine = ADP + protein N-phospho-L-histidine.. Functionally, member of the two-component regulatory system DctB/DctD, which regulates C4-dicarboxylate transport via regulation of expression of the dctPQM operon and dctA. DctB functions as a membrane-associated protein kinase that phosphorylates DctD in response to environmental signals. In Pseudomonas aeruginosa (strain ATCC 15692 / DSM 22644 / CIP 104116 / JCM 14847 / LMG 12228 / 1C / PRS 101 / PAO1), this protein is C4-dicarboxylate transport sensor protein DctB.